The chain runs to 339 residues: Serine/threonine-protein kinase SRK2J (339 aa).

The region spanning 4 to 260 (YEMVKDLGFG…LKEIKSHAWF (257 aa)) is the Protein kinase domain. Residues 10–18 (LGFGNFGLA) and Lys33 each bind ATP. The Proton acceptor role is filled by Asp123. A disordered region spans residues 308 to 339 (SRPVESLGSDKKDDDEEEYLDANDEEWYDDYA). A compositionally biased stretch (acidic residues) spans 320–339 (DDDEEEYLDANDEEWYDDYA).

Belongs to the protein kinase superfamily. Ser/Thr protein kinase family. Expressed in seedlings.

It catalyses the reaction L-seryl-[protein] + ATP = O-phospho-L-seryl-[protein] + ADP + H(+). It carries out the reaction L-threonyl-[protein] + ATP = O-phospho-L-threonyl-[protein] + ADP + H(+). This is Serine/threonine-protein kinase SRK2J (SRK2J) from Arabidopsis thaliana (Mouse-ear cress).